The following is an 804-amino-acid chain: Protein SEY1 homolog 1 (804 aa).

The Cytoplasmic portion of the chain corresponds to 1-638 (MEQIITGEGQ…SVLASQNNEH (638 aa)). The 218-residue stretch at 28-245 (GTDYHMVSII…EENYLFKEKS (218 aa)) folds into the GB1/RHD3-type G domain. 38 to 45 (GCQSSGKS) is a binding site for GTP. Residues 639–659 (IPPWAWFLFLFSCSDYILWWL) traverse the membrane as a helical segment. Residues 660-662 (SNP) are Lumenal-facing. The chain crosses the membrane as a helical span at residues 663–683 (LLFSLTVLFGGTYLVLNQLGL). Residues 684–804 (WDTAVQKLLD…RKRVRVGTLV (121 aa)) lie on the Cytoplasmic side of the membrane. The interval 706–804 (PDENNETETN…RKRVRVGTLV (99 aa)) is disordered. Polar residues predominate over residues 751 to 791 (QGLTKTESNVTFANVSNANDEQSLTKNNTEDSLNTGSSSSG). Over residues 792–804 (QRHRKRVRVGTLV) the composition is skewed to basic residues.

This sequence belongs to the TRAFAC class dynamin-like GTPase superfamily. GB1/RHD3 GTPase family. RHD3 subfamily.

Its subcellular location is the endoplasmic reticulum membrane. Probable GTP-binding protein that may be involved in cell development. In Trichomonas vaginalis (strain ATCC PRA-98 / G3), this protein is Protein SEY1 homolog 1.